We begin with the raw amino-acid sequence, 412 residues long: Alpha-ketoglutarate-dependent sulfonate dioxygenase (412 aa).

S52 is subject to Phosphoserine. The Fe cation site is built by H218 and D220. Residues T245 and W352 each coordinate 2-oxoglutarate. H367 provides a ligand contact to Fe cation. R379 and R383 together coordinate 2-oxoglutarate.

This sequence belongs to the TfdA dioxygenase family. The cofactor is Fe(2+).

The protein operates within organosulfur degradation; alkanesulfonate degradation. Functionally, acts as an alpha-ketoglutarate-dependent dioxygenase active on sulfonates. Although taurine is a poor substrate, a variety of other sulfonates are utilized, with the best natural substrates being isethionate and taurocholate. The chain is Alpha-ketoglutarate-dependent sulfonate dioxygenase (JLP1) from Saccharomyces cerevisiae (strain ATCC 204508 / S288c) (Baker's yeast).